Reading from the N-terminus, the 428-residue chain is Isocitrate lyase 1 (428 aa).

Position 91–93 (91–93) interacts with substrate; it reads SGW. Aspartate 153 lines the Mg(2+) pocket. Catalysis depends on cysteine 191, which acts as the Proton acceptor. Residues 192 to 193, arginine 228, 313 to 317, and threonine 347 contribute to the substrate site; these read GH and NCSPS.

It belongs to the isocitrate lyase/PEP mutase superfamily. Isocitrate lyase family. In terms of assembly, homotetramer. Mg(2+) serves as cofactor.

The enzyme catalyses D-threo-isocitrate = glyoxylate + succinate. It carries out the reaction (2S,3R)-3-hydroxybutane-1,2,3-tricarboxylate = pyruvate + succinate. It participates in carbohydrate metabolism; glyoxylate cycle; (S)-malate from isocitrate: step 1/2. Its function is as follows. Involved in the persistence and virulence of M.tuberculosis. Catalyzes the reversible formation of succinate and glyoxylate from isocitrate, a key step of the glyoxylate cycle, which operates as an anaplerotic route for replenishing the tricarboxylic acid cycle during growth on fatty acid substrates. It also catalyzes the formation of pyruvate and succinate from 2-methylisocitrate, a key step in the methylcitrate cycle (propionate degradation route). This Mycobacterium tuberculosis (strain ATCC 35801 / TMC 107 / Erdman) protein is Isocitrate lyase 1 (icl1).